Here is a 130-residue protein sequence, read N- to C-terminus: Small ribosomal subunit protein uS8 (130 aa).

It belongs to the universal ribosomal protein uS8 family. In terms of assembly, part of the 30S ribosomal subunit.

One of the primary rRNA binding proteins, it binds directly to 16S rRNA central domain where it helps coordinate assembly of the platform of the 30S subunit. The sequence is that of Small ribosomal subunit protein uS8 from Methanosphaerula palustris (strain ATCC BAA-1556 / DSM 19958 / E1-9c).